The primary structure comprises 96 residues: UPF0184 protein CG14818 (96 aa).

Disordered stretches follow at residues 1–28 (MSPK…LQEM) and 70–96 (IAEE…AAPK). Residues 8–21 (DPSSSGDSGNTNVQ) show a composition bias toward polar residues. A coiled-coil region spans residues 21–77 (QEADLQEMEDVNNSLDALSCALDAVEQRTDDIMSQLRELLNSNREIRRLIAEENDNA). The segment covering 72-85 (EENDNAPESGDDNM) has biased composition (acidic residues).

It belongs to the UPF0184 (EST00098) family.

The polypeptide is UPF0184 protein CG14818 (Drosophila melanogaster (Fruit fly)).